We begin with the raw amino-acid sequence, 146 residues long: Small ribosomal subunit protein eS19 (146 aa).

It belongs to the eukaryotic ribosomal protein eS19 family.

The chain is Small ribosomal subunit protein eS19 (RPS19A) from Oryza sativa subsp. japonica (Rice).